A 418-amino-acid polypeptide reads, in one-letter code: Odorant receptor 13a (418 aa).

Over 1–38 (MFYSYPYKALSFPIQCVWLKLNGSWPLTESSRPWRSQS) the chain is Cytoplasmic. The chain crosses the membrane as a helical span at residues 39–59 (LLATAYIVWAWYVIASVGITI). Residues 60 to 70 (SYQTAFLLNNL) lie on the Extracellular side of the membrane. An N-linked (GlcNAc...) asparagine glycan is attached at asparagine 69. The chain crosses the membrane as a helical span at residues 71 to 91 (SDIIITTENCCTTFMGVLNFV). Residues 92–140 (RLIHLRLNQRKFRQLIENFSYEIWIPNSSKNNVAAECRRRMVTFSIMTS) are Cytoplasmic-facing. A helical membrane pass occupies residues 141–161 (LLACLIIMYCVLPLVEIFFGP). Residues 162–195 (AFDAQNKPFPYKMIFPYDAQSSWIRYVMTYIFTS) are Extracellular-facing. The chain crosses the membrane as a helical span at residues 196 to 216 (YAGICVVTTLFAEDTILGFFI). At 217–273 (TYTCGQFHLLHQRIAGLFAGSNAELAESIQLERLKRIVEKHNNIISFAKRLEDFFNP) the chain is on the cytoplasmic side. A helical membrane pass occupies residues 274 to 294 (ILLANLMISSVLICMVGFQIV). Residues 295-299 (TGKNM) are Extracellular-facing. The chain crosses the membrane as a helical span at residues 300 to 320 (FIGDYVKFIIYISSALSQLYV). The Cytoplasmic segment spans residues 321–385 (LCENGDALIK…PVRITAFKFS (65 aa)). Residues 386–406 (TLSLQSFTAILSTSISYFTLL) form a helical membrane-spanning segment. Residues 407 to 418 (RSVYFDDEKKLD) are Extracellular-facing.

This sequence belongs to the insect chemoreceptor superfamily. Heteromeric odorant receptor channel (TC 1.A.69) family. Or1a subfamily. As to quaternary structure, interacts with Orco. Complexes exist early in the endomembrane system in olfactory sensory neurons (OSNs), coupling these complexes to the conserved ciliary trafficking pathway. As to expression, expressed in olfactory sensory neurons in the antenna.

It localises to the cell membrane. Odorant receptor which mediates acceptance or avoidance behavior, depending on its substrates. The odorant receptor repertoire encodes a large collection of odor stimuli that vary widely in identity, intensity, and duration. May form a complex with Orco to form odorant-sensing units, providing sensitive and prolonged odorant signaling and calcium permeability. Involved in the behavioral responses to octanol, nonanol, and pentyl acetate. The chain is Odorant receptor 13a (Or13a) from Drosophila melanogaster (Fruit fly).